The sequence spans 617 residues: Protein fem-1 homolog C (617 aa).

Position 1 is an N-acetylmethionine (Met1). ANK repeat units lie at residues 2-31 (DLKT…KEEV), 40-70 (NGAT…SIEV), 82-111 (EGAP…SVNN), 115-144 (TNST…DLEV), 148-177 (HGHT…DVNR), 181-210 (KGNT…KMEK), and 213-242 (YGMT…TSKT). 2 TPR repeats span residues 245–279 (INAL…RYSD) and 338–371 (SYYI…QQSN). ANK repeat units lie at residues 481–523 (NNFS…DVNV) and 527–556 (DDNS…HFDA).

This sequence belongs to the fem-1 family. As to quaternary structure, component of a Cul2-RING (CRL2) E3 ubiquitin-protein ligase complex, also named ECS (Elongin BC-CUL2/5-SOCS-box protein) complex, composed of CUL2, Elongin BC (ELOB and ELOC), RBX1 and substrate-specific adapter FEM1C. Widely expressed. Highly expressed in kidney, cardiac tissue, skeletal muscle and testis. Expressed at lower levels in other tissues, including cartilage.

It functions in the pathway protein modification; protein ubiquitination. In terms of biological role, substrate-recognition component of a Cul2-RING (CRL2) E3 ubiquitin-protein ligase complex of the DesCEND (destruction via C-end degrons) pathway, which recognizes a C-degron located at the extreme C terminus of target proteins, leading to their ubiquitination and degradation. The C-degron recognized by the DesCEND pathway is usually a motif of less than ten residues and can be present in full-length proteins, truncated proteins or proteolytically cleaved forms. The CRL2(FEM1C) complex specifically recognizes proteins with an arginine at the C-terminus: recognizes and binds proteins ending with -Lys/Arg-Xaa-Arg and -Lys/Arg-Xaa-Xaa-Arg C-degrons, such as SIL1 or OR51B2, leading to their ubiquitination and degradation. The CRL2(FEM1C) complex mediates ubiquitination and degradation of truncated MSRB1/SEPX1 selenoproteins produced by failed UGA/Sec decoding. Promotes ubiquitination and degradation of SLBP. This chain is Protein fem-1 homolog C, found in Homo sapiens (Human).